Here is a 307-residue protein sequence, read N- to C-terminus: Tyrosine recombinase XerC (307 aa).

Residues 9–95 (ETLSLAIDSF…ALRSFLDWQV (87 aa)) form the Core-binding (CB) domain. A Tyr recombinase domain is found at 116–296 (HLPKNMDVDE…DFQHLAKVYD (181 aa)). Residues Arg155, Lys179, His248, Arg251, and His274 contribute to the active site. Catalysis depends on Tyr283, which acts as the O-(3'-phospho-DNA)-tyrosine intermediate.

This sequence belongs to the 'phage' integrase family. XerC subfamily. In terms of assembly, forms a cyclic heterotetrameric complex composed of two molecules of XerC and two molecules of XerD, in which XerC interacts with XerD via its C-terminal region, XerD interacts with XerC via its C-terminal region and so on.

The protein localises to the cytoplasm. FtsK may regulate the catalytic switch between XerC and XerD in the heterotetrameric complex during the two steps of the recombination process. In terms of biological role, site-specific tyrosine recombinase, which acts by catalyzing the cutting and rejoining of the recombining DNA molecules. Binds cooperatively to specific DNA consensus sequences that are separated from XerD binding sites by a short central region, forming the heterotetrameric XerC-XerD complex that recombines DNA substrates. The complex is essential to convert dimers of the bacterial chromosome into monomers to permit their segregation at cell division. It also contributes to the segregational stability of plasmids. In the complex XerC specifically exchanges the top DNA strands. The protein is Tyrosine recombinase XerC of Proteus mirabilis.